A 149-amino-acid chain; its full sequence is uncharacterized protein (149 aa).

This is an uncharacterized protein from Schizosaccharomyces pombe (strain 972 / ATCC 24843) (Fission yeast).